A 303-amino-acid chain; its full sequence is Cytidine deaminase (303 aa).

CMP/dCMP-type deaminase domains lie at 57–172 (TDKE…YLPD) and 196–303 (ITED…IQVS). Residue 98–100 (NQE) coordinates substrate. A Zn(2+)-binding site is contributed by His111. Glu113 acts as the Proton donor in catalysis. Residues Cys138 and Cys141 each contribute to the Zn(2+) site.

The protein belongs to the cytidine and deoxycytidylate deaminase family. Homodimer. Zn(2+) is required as a cofactor.

The enzyme catalyses cytidine + H2O + H(+) = uridine + NH4(+). It catalyses the reaction 2'-deoxycytidine + H2O + H(+) = 2'-deoxyuridine + NH4(+). Functionally, this enzyme scavenges exogenous and endogenous cytidine and 2'-deoxycytidine for UMP synthesis. This chain is Cytidine deaminase, found in Histophilus somni (strain 2336) (Haemophilus somnus).